The sequence spans 165 residues: MSIWVDADACPVVIKDMLYRAARRTNTTLTLVANSFLRVPPSPLIRAIQVPAGFDAADDLIAERVAAGDLVITADIPLAAAVLAKNAQALDPRGNWYTPGTIEERLRMRSMLDQLRGSGVDTGGPSAFSQRDSKSFAGELDRWLSRQRPQPDASAPQSADEPPTE.

2 disordered regions span residues 115–134 and 139–165; these read LRGS…RDSK and ELDR…PPTE.

It belongs to the UPF0178 family.

The protein is UPF0178 protein Bphyt_5655 of Paraburkholderia phytofirmans (strain DSM 17436 / LMG 22146 / PsJN) (Burkholderia phytofirmans).